Here is a 106-residue protein sequence, read N- to C-terminus: L-rhamnose mutarotase (106 aa).

Residue Tyr20 participates in substrate binding. His24 functions as the Proton donor in the catalytic mechanism. Residues Tyr43 and 78–79 (WW) each bind substrate.

It belongs to the rhamnose mutarotase family. As to quaternary structure, homodimer.

The protein localises to the cytoplasm. It catalyses the reaction alpha-L-rhamnose = beta-L-rhamnose. It functions in the pathway carbohydrate metabolism; L-rhamnose metabolism. In terms of biological role, involved in the anomeric conversion of L-rhamnose. In Brucella anthropi (strain ATCC 49188 / DSM 6882 / CCUG 24695 / JCM 21032 / LMG 3331 / NBRC 15819 / NCTC 12168 / Alc 37) (Ochrobactrum anthropi), this protein is L-rhamnose mutarotase.